Here is an 81-residue protein sequence, read N- to C-terminus: uncharacterized protein (81 aa).

The interval 46-81 (ASSPVVKRKSLVKRKSPVKRSPLKKRSQMRTSPCEA) is disordered. A compositionally biased stretch (basic residues) spans 51-73 (VKRKSLVKRKSPVKRSPLKKRSQ).

This is an uncharacterized protein from Frog virus 3 (isolate Goorha) (FV-3).